We begin with the raw amino-acid sequence, 122 residues long: Fluoride-specific ion channel FluC 2 (122 aa).

Helical transmembrane passes span 1-21 (MAWL…FLLS), 33-53 (PLGT…LLAL), 62-82 (VTLA…TFTY), and 102-122 (GSIL…GSLF). Residues G72 and T75 each coordinate Na(+).

It belongs to the fluoride channel Fluc/FEX (TC 1.A.43) family.

It localises to the cell membrane. The enzyme catalyses fluoride(in) = fluoride(out). Na(+) is not transported, but it plays an essential structural role and its presence is essential for fluoride channel function. Functionally, fluoride-specific ion channel. Important for reducing fluoride concentration in the cell, thus reducing its toxicity. The sequence is that of Fluoride-specific ion channel FluC 2 from Moorella thermoacetica (strain ATCC 39073 / JCM 9320).